We begin with the raw amino-acid sequence, 231 residues long: Endonuclease NucS (231 aa).

The protein belongs to the NucS endonuclease family.

The protein localises to the cytoplasm. Functionally, cleaves both 3' and 5' ssDNA extremities of branched DNA structures. The chain is Endonuclease NucS from Micrococcus luteus (strain ATCC 4698 / DSM 20030 / JCM 1464 / CCM 169 / CCUG 5858 / IAM 1056 / NBRC 3333 / NCIMB 9278 / NCTC 2665 / VKM Ac-2230) (Micrococcus lysodeikticus).